A 336-amino-acid polypeptide reads, in one-letter code: Glucokinase (336 aa).

Residue 12-17 participates in ATP binding; sequence ADIGGT.

Belongs to the bacterial glucokinase family.

It is found in the cytoplasm. It catalyses the reaction D-glucose + ATP = D-glucose 6-phosphate + ADP + H(+). In Helicobacter pylori (strain P12), this protein is Glucokinase.